Reading from the N-terminus, the 39-residue chain is Conotoxin Cl14.7 (39 aa).

Positions 1 to 15 (MGDLSEADSMKHQLQ) are excised as a propeptide.

In terms of processing, contains 2 disulfide bonds. As to expression, expressed by the venom duct.

It localises to the secreted. The protein is Conotoxin Cl14.7 of Californiconus californicus (California cone).